The primary structure comprises 176 residues: Endoribonuclease YbeY (176 aa).

Zn(2+) contacts are provided by histidine 117, histidine 121, and histidine 127.

This sequence belongs to the endoribonuclease YbeY family. Requires Zn(2+) as cofactor.

Its subcellular location is the cytoplasm. Single strand-specific metallo-endoribonuclease involved in late-stage 70S ribosome quality control and in maturation of the 3' terminus of the 16S rRNA. This Methylocella silvestris (strain DSM 15510 / CIP 108128 / LMG 27833 / NCIMB 13906 / BL2) protein is Endoribonuclease YbeY.